Here is a 174-residue protein sequence, read N- to C-terminus: Crossover junction endodeoxyribonuclease RuvC (174 aa).

Catalysis depends on residues aspartate 8, glutamate 67, and aspartate 139. Mg(2+) is bound by residues aspartate 8, glutamate 67, and aspartate 139.

This sequence belongs to the RuvC family. As to quaternary structure, homodimer which binds Holliday junction (HJ) DNA. The HJ becomes 2-fold symmetrical on binding to RuvC with unstacked arms; it has a different conformation from HJ DNA in complex with RuvA. In the full resolvosome a probable DNA-RuvA(4)-RuvB(12)-RuvC(2) complex forms which resolves the HJ. The cofactor is Mg(2+).

It is found in the cytoplasm. It carries out the reaction Endonucleolytic cleavage at a junction such as a reciprocal single-stranded crossover between two homologous DNA duplexes (Holliday junction).. Functionally, the RuvA-RuvB-RuvC complex processes Holliday junction (HJ) DNA during genetic recombination and DNA repair. Endonuclease that resolves HJ intermediates. Cleaves cruciform DNA by making single-stranded nicks across the HJ at symmetrical positions within the homologous arms, yielding a 5'-phosphate and a 3'-hydroxyl group; requires a central core of homology in the junction. The consensus cleavage sequence is 5'-(A/T)TT(C/G)-3'. Cleavage occurs on the 3'-side of the TT dinucleotide at the point of strand exchange. HJ branch migration catalyzed by RuvA-RuvB allows RuvC to scan DNA until it finds its consensus sequence, where it cleaves and resolves the cruciform DNA. This Stutzerimonas stutzeri (strain A1501) (Pseudomonas stutzeri) protein is Crossover junction endodeoxyribonuclease RuvC.